The chain runs to 622 residues: uncharacterized protein (622 aa).

An N-terminal signal peptide occupies residues 1–20 (MKIKAVAIFLSLLMIISLFS).

This is an uncharacterized protein from Methanocaldococcus jannaschii (strain ATCC 43067 / DSM 2661 / JAL-1 / JCM 10045 / NBRC 100440) (Methanococcus jannaschii).